We begin with the raw amino-acid sequence, 218 residues long: Riboflavin kinase (218 aa).

Positions 1 to 27 are disordered; the sequence is MRPDGPRDPVAGPDSGPEPPYPVRLSG. Mg(2+) contacts are provided by Thr44 and Asn46. Residue Glu120 is the Nucleophile of the active site.

It belongs to the flavokinase family. It depends on Zn(2+) as a cofactor. Mg(2+) is required as a cofactor.

The catalysed reaction is riboflavin + ATP = FMN + ADP + H(+). It participates in cofactor biosynthesis; FMN biosynthesis; FMN from riboflavin (ATP route): step 1/1. Catalyzes the phosphorylation of riboflavin (vitamin B2) to form flavin mononucleotide (FMN) coenzyme. The protein is Riboflavin kinase (fmn1) of Neosartorya fischeri (strain ATCC 1020 / DSM 3700 / CBS 544.65 / FGSC A1164 / JCM 1740 / NRRL 181 / WB 181) (Aspergillus fischerianus).